The following is a 411-amino-acid chain: Citrate synthase (411 aa).

Residues His-304 and Asp-363 contribute to the active site.

This sequence belongs to the citrate synthase family.

It catalyses the reaction oxaloacetate + acetyl-CoA + H2O = citrate + CoA + H(+). It functions in the pathway carbohydrate metabolism; tricarboxylic acid cycle; isocitrate from oxaloacetate: step 1/2. This Rickettsia australis protein is Citrate synthase (gltA).